We begin with the raw amino-acid sequence, 592 residues long: Arginine--tRNA ligase (592 aa).

Positions Ala134–His144 match the 'HIGH' region motif.

It belongs to the class-I aminoacyl-tRNA synthetase family. Monomer.

Its subcellular location is the cytoplasm. The catalysed reaction is tRNA(Arg) + L-arginine + ATP = L-arginyl-tRNA(Arg) + AMP + diphosphate. This is Arginine--tRNA ligase from Coxiella burnetii (strain CbuK_Q154) (Coxiella burnetii (strain Q154)).